The primary structure comprises 185 residues: uncharacterized protein (185 aa).

This is an uncharacterized protein from Archaeoglobus fulgidus (strain ATCC 49558 / DSM 4304 / JCM 9628 / NBRC 100126 / VC-16).